Consider the following 53-residue polypeptide: Neuronal protein NP-190 (53 aa).

Mainly expressed in the fetal brain where it is specifically localized to the proximal axonal segments, cell bodies and growth cones. Lower level of expression was also detected in the fetal heart and the skeletal muscle. No expression in kidney, liver, lung or spleen.

The protein resides in the membrane. Functionally, neuronal antigen that may play a role in brain development. May be involved in neurite formation or axonal guidance. In Sus scrofa (Pig), this protein is Neuronal protein NP-190.